The primary structure comprises 275 residues: 2,3,4,5-tetrahydropyridine-2,6-dicarboxylate N-succinyltransferase (275 aa).

Residues Arg-108 and Asp-145 each coordinate substrate.

Belongs to the transferase hexapeptide repeat family. Homotrimer.

It is found in the cytoplasm. The catalysed reaction is (S)-2,3,4,5-tetrahydrodipicolinate + succinyl-CoA + H2O = (S)-2-succinylamino-6-oxoheptanedioate + CoA. The protein operates within amino-acid biosynthesis; L-lysine biosynthesis via DAP pathway; LL-2,6-diaminopimelate from (S)-tetrahydrodipicolinate (succinylase route): step 1/3. This is 2,3,4,5-tetrahydropyridine-2,6-dicarboxylate N-succinyltransferase from Jannaschia sp. (strain CCS1).